An 892-amino-acid chain; its full sequence is DNA mismatch repair protein MutS (892 aa).

607-614 serves as a coordination point for ATP; that stretch reads GPNMSGKS. The interval 833–854 is disordered; the sequence is EESQLSFFGGEQSPKKQDKPVL. Basic and acidic residues predominate over residues 845–854; the sequence is SPKKQDKPVL.

The protein belongs to the DNA mismatch repair MutS family.

In terms of biological role, this protein is involved in the repair of mismatches in DNA. It is possible that it carries out the mismatch recognition step. This protein has a weak ATPase activity. In Bacillus cereus (strain Q1), this protein is DNA mismatch repair protein MutS.